A 72-amino-acid chain; its full sequence is Small proline-rich protein 2E (72 aa).

The span at 1–11 (MSYQQQQCKQP) shows a compositional bias: low complexity. Residues 1 to 20 (MSYQQQQCKQPCQPPPVCPT) form a disordered region. Tandem repeats lie at residues 21–29 (PKCPEPCPP), 30–38 (PKCPEPCPP), and 39–47 (PKCPQPCPP). The 3 X 9 AA tandem repeats of P-K-C-P-[EQ]-P-C-P-P stretch occupies residues 21–47 (PKCPEPCPPPKCPEPCPPPKCPQPCPP). A disordered region spans residues 42–72 (PQPCPPQQCQQKCPPVTPSPPCQPKCPPKSK). The segment covering 56–72 (PVTPSPPCQPKCPPKSK) has biased composition (pro residues).

It belongs to the cornifin (SPRR) family.

It is found in the cytoplasm. In terms of biological role, cross-linked envelope protein of keratinocytes. It is a keratinocyte protein that first appears in the cell cytosol, but ultimately becomes cross-linked to membrane proteins by transglutaminase. All that results in the formation of an insoluble envelope beneath the plasma membrane. This is Small proline-rich protein 2E (SPRR2E) from Homo sapiens (Human).